Consider the following 150-residue polypeptide: UPF0756 membrane protein STH2648 (150 aa).

4 helical membrane-spanning segments follow: residues 13–33, 52–72, 85–105, and 111–131; these read ALGVVARNALIVTAAGVVLIL, AGLIFLLIAVLVPFATGEVGW, LAAILGGIIAAVLSGYGVTLL, and VIVGMVVGTILGVVLFKGIPV.

This sequence belongs to the UPF0756 family.

The protein localises to the cell membrane. This chain is UPF0756 membrane protein STH2648, found in Symbiobacterium thermophilum (strain DSM 24528 / JCM 14929 / IAM 14863 / T).